A 410-amino-acid chain; its full sequence is 3-phosphoshikimate 1-carboxyvinyltransferase (410 aa).

The 3-phosphoshikimate site is built by K20, S21, and R25. K20 contributes to the phosphoenolpyruvate binding site. R115 is a binding site for phosphoenolpyruvate. 3-phosphoshikimate-binding residues include S157, S158, Q159, S183, D293, and K320. Residue Q159 coordinates phosphoenolpyruvate. The Proton acceptor role is filled by D293. Phosphoenolpyruvate-binding residues include R324, R365, and K391.

Belongs to the EPSP synthase family. Monomer.

The protein resides in the cytoplasm. It catalyses the reaction 3-phosphoshikimate + phosphoenolpyruvate = 5-O-(1-carboxyvinyl)-3-phosphoshikimate + phosphate. It participates in metabolic intermediate biosynthesis; chorismate biosynthesis. Its function is as follows. Catalyzes the transfer of the enolpyruvyl moiety of phosphoenolpyruvate (PEP) to the 5-hydroxyl of shikimate-3-phosphate (S3P) to produce enolpyruvyl shikimate-3-phosphate and inorganic phosphate. In Thermoplasma acidophilum (strain ATCC 25905 / DSM 1728 / JCM 9062 / NBRC 15155 / AMRC-C165), this protein is 3-phosphoshikimate 1-carboxyvinyltransferase.